The following is a 356-amino-acid chain: Uroporphyrinogen decarboxylase (356 aa).

Substrate is bound by residues 27 to 31, Asp-77, Tyr-154, Thr-209, and His-327; that span reads RQAGR.

The protein belongs to the uroporphyrinogen decarboxylase family. Homodimer.

It localises to the cytoplasm. It catalyses the reaction uroporphyrinogen III + 4 H(+) = coproporphyrinogen III + 4 CO2. It participates in porphyrin-containing compound metabolism; protoporphyrin-IX biosynthesis; coproporphyrinogen-III from 5-aminolevulinate: step 4/4. In terms of biological role, catalyzes the decarboxylation of four acetate groups of uroporphyrinogen-III to yield coproporphyrinogen-III. This is Uroporphyrinogen decarboxylase from Cellvibrio japonicus (strain Ueda107) (Pseudomonas fluorescens subsp. cellulosa).